The sequence spans 485 residues: Cysteine--tRNA ligase (485 aa).

Cys27 provides a ligand contact to Zn(2+). The short motif at 29–39 is the 'HIGH' region element; that stretch reads ITAYDLCHIGH. Zn(2+) contacts are provided by Cys208, His233, and Glu237. Residues 265–269 carry the 'KMSKS' region motif; that stretch reads KMSKS. Residue Lys268 participates in ATP binding.

It belongs to the class-I aminoacyl-tRNA synthetase family. Monomer. Requires Zn(2+) as cofactor.

It is found in the cytoplasm. The catalysed reaction is tRNA(Cys) + L-cysteine + ATP = L-cysteinyl-tRNA(Cys) + AMP + diphosphate. This is Cysteine--tRNA ligase from Solidesulfovibrio magneticus (strain ATCC 700980 / DSM 13731 / RS-1) (Desulfovibrio magneticus).